Here is a 249-residue protein sequence, read N- to C-terminus: Electron transfer flavoprotein subunit beta (249 aa).

Belongs to the ETF beta-subunit/FixA family. In terms of assembly, heterodimer of an alpha and a beta subunit. Requires FAD as cofactor. AMP is required as a cofactor.

Its function is as follows. The electron transfer flavoprotein serves as a specific electron acceptor for other dehydrogenases. It transfers the electrons to the main respiratory chain via ETF-ubiquinone oxidoreductase (ETF dehydrogenase). The chain is Electron transfer flavoprotein subunit beta (etfB) from Bradyrhizobium diazoefficiens (strain JCM 10833 / BCRC 13528 / IAM 13628 / NBRC 14792 / USDA 110).